The chain runs to 105 residues: MEVDILSEDENSMLHRTDIQFEIAHEDATPSRLSVRDSLAAKINKDSDEVVVHKLDTKFGMRKTIGYAKVYDSPQSARQVEQDYMLKRNKIEIESEDEDSAAEGA.

It belongs to the eukaryotic ribosomal protein eS24 family.

This Haloquadratum walsbyi (strain DSM 16790 / HBSQ001) protein is Small ribosomal subunit protein eS24.